The primary structure comprises 258 residues: UPF0328 protein ECU02_0090 (258 aa).

The protein belongs to the UPF0328 family.

The protein is UPF0328 protein ECU02_0090 of Encephalitozoon cuniculi (strain GB-M1) (Microsporidian parasite).